The primary structure comprises 1131 residues: Kinesin-like protein CG14535 (1131 aa).

Residues 1–11 show a composition bias toward polar residues; the sequence is MATTSTSNMSR. A disordered region spans residues 1 to 25; the sequence is MATTSTSNMSRNGGFCGALQRAPPP. In terms of domain architecture, Kinesin motor spans 44 to 396; that stretch reads KVKVMLRVAD…IQIASRIHRL (353 aa). 4 disordered regions span residues 472 to 494, 693 to 753, 905 to 926, and 1016 to 1072; these read ALKGSGLEKPPSKSASNSPMMMK, DLPD…SRDI, PAYRLTPSPPKQPSHSPSQGSL, and TSSE…QRHR. A compositionally biased stretch (low complexity) spans 483–494; it reads SKSASNSPMMMK. Positions 1016-1032 are enriched in polar residues; sequence TSSEAYDSGHDSNSTPR.

Belongs to the TRAFAC class myosin-kinesin ATPase superfamily. Kinesin family. KIF26 subfamily.

The protein localises to the cytoplasm. The protein resides in the cytoskeleton. This chain is Kinesin-like protein CG14535, found in Drosophila melanogaster (Fruit fly).